A 260-amino-acid polypeptide reads, in one-letter code: Putative protein phosphatase (260 aa).

Residues 9 to 254 (FTGLSKKGPV…DNITAALVNL (246 aa)) form the PPM-type phosphatase domain.

It carries out the reaction O-phospho-L-seryl-[protein] + H2O = L-seryl-[protein] + phosphate. It catalyses the reaction O-phospho-L-threonyl-[protein] + H2O = L-threonyl-[protein] + phosphate. The polypeptide is Putative protein phosphatase (Mycoplasma genitalium (strain ATCC 33530 / DSM 19775 / NCTC 10195 / G37) (Mycoplasmoides genitalium)).